The chain runs to 492 residues: Transcript termination protein A18 (492 aa).

The region spanning 100–256 (MIELKRPLYI…NSIINIAKLS (157 aa)) is the Helicase ATP-binding domain. 113 to 120 (LACGFGKT) serves as a coordination point for ATP. The DESH box motif lies at 206 to 209 (DESH).

This sequence belongs to the helicase family. Poxviruses subfamily. Interacts with G2. Might be part of a transcription complex composed at least of G2, A18, and H5.

It localises to the virion. DNA helicase which seems to act as a postreplicative transcription termination factor. Involved in ATP-dependent release of nascent RNA. Forms a stable complex with single-stranded DNA, and to a lesser extent RNA. The sequence is that of Transcript termination protein A18 from Bos taurus (Bovine).